We begin with the raw amino-acid sequence, 722 residues long: Pentatricopeptide repeat-containing protein At4g14820 (722 aa).

PPR repeat units lie at residues 75–109 (ESIV…GGRL), 110–140 (DQFS…AFKI), 145–175 (DPFV…MSHR), 176–210 (DVVT…NVMP), 211–245 (DEMI…DVRM), 246–276 (DTHL…MSVR), 277–307 (NLFV…TEKK), 308–342 (DLVC…GIKP), 343–377 (DVVS…GLES), 378–408 (ELSI…MPRR), 409–443 (NVVS…NVEP), 444–479 (NEVT…NITP), and 480–514 (KLEH…SNVV). A type E motif region spans residues 515–590 (IWGSLMSACR…EKGLSRIDQN (76 aa)). The segment at 591–621 (GKSHEFLIGDKRHKQSNEIYAKLDEVVSKLK) is type E(+) motif. The tract at residues 622–722 (LAGYVPDCGS…NGLCSCRDYW (101 aa)) is type DYW motif.

Belongs to the PPR family. PCMP-H subfamily.

This Arabidopsis thaliana (Mouse-ear cress) protein is Pentatricopeptide repeat-containing protein At4g14820 (PCMP-H3).